The chain runs to 525 residues: GMP synthase [glutamine-hydrolyzing] (525 aa).

In terms of domain architecture, Glutamine amidotransferase type-1 spans 9 to 207 (RILILDFGSQ…VRDICQCEAL (199 aa)). The active-site Nucleophile is the cysteine 86. Active-site residues include histidine 181 and glutamate 183. One can recognise a GMPS ATP-PPase domain in the interval 208–400 (WTPAKIIDDA…LGLPYDMLYR (193 aa)). ATP is bound at residue 235–241 (SGGVDSS).

As to quaternary structure, homodimer.

It carries out the reaction XMP + L-glutamine + ATP + H2O = GMP + L-glutamate + AMP + diphosphate + 2 H(+). Its pathway is purine metabolism; GMP biosynthesis; GMP from XMP (L-Gln route): step 1/1. In terms of biological role, catalyzes the synthesis of GMP from XMP. The polypeptide is GMP synthase [glutamine-hydrolyzing] (Escherichia coli O127:H6 (strain E2348/69 / EPEC)).